The primary structure comprises 181 residues: Translation initiation factor IF-3 (181 aa).

Belongs to the IF-3 family. In terms of assembly, monomer.

The protein resides in the cytoplasm. IF-3 binds to the 30S ribosomal subunit and shifts the equilibrium between 70S ribosomes and their 50S and 30S subunits in favor of the free subunits, thus enhancing the availability of 30S subunits on which protein synthesis initiation begins. This is Translation initiation factor IF-3 from Cereibacter sphaeroides (strain ATCC 17023 / DSM 158 / JCM 6121 / CCUG 31486 / LMG 2827 / NBRC 12203 / NCIMB 8253 / ATH 2.4.1.) (Rhodobacter sphaeroides).